The following is a 521-amino-acid chain: Protein YjiT (521 aa).

The polypeptide is Protein YjiT (yjiT) (Escherichia coli (strain K12)).